Here is a 160-residue protein sequence, read N- to C-terminus: Ribosomal RNA large subunit methyltransferase H (160 aa).

S-adenosyl-L-methionine is bound by residues leucine 76, glycine 108, and 127 to 132; that span reads LGKLTW.

Belongs to the RNA methyltransferase RlmH family. In terms of assembly, homodimer.

The protein resides in the cytoplasm. The enzyme catalyses pseudouridine(1915) in 23S rRNA + S-adenosyl-L-methionine = N(3)-methylpseudouridine(1915) in 23S rRNA + S-adenosyl-L-homocysteine + H(+). Functionally, specifically methylates the pseudouridine at position 1915 (m3Psi1915) in 23S rRNA. The sequence is that of Ribosomal RNA large subunit methyltransferase H from Agrobacterium fabrum (strain C58 / ATCC 33970) (Agrobacterium tumefaciens (strain C58)).